The following is a 224-amino-acid chain: Lipoprotein-releasing system ATP-binding protein LolD (224 aa).

Residues L5–V224 enclose the ABC transporter domain. G37–S44 provides a ligand contact to ATP.

The protein belongs to the ABC transporter superfamily. Lipoprotein translocase (TC 3.A.1.125) family. As to quaternary structure, the complex is composed of two ATP-binding proteins (LolD) and two transmembrane proteins (LolC and LolE).

The protein resides in the cell inner membrane. Its function is as follows. Part of the ABC transporter complex LolCDE involved in the translocation of mature outer membrane-directed lipoproteins, from the inner membrane to the periplasmic chaperone, LolA. Responsible for the formation of the LolA-lipoprotein complex in an ATP-dependent manner. The chain is Lipoprotein-releasing system ATP-binding protein LolD from Aquifex aeolicus (strain VF5).